The chain runs to 515 residues: ATP synthase subunit alpha (515 aa).

An ATP-binding site is contributed by 171–178; sequence GDRQTGKT.

The protein belongs to the ATPase alpha/beta chains family. In terms of assembly, F-type ATPases have 2 components, CF(1) - the catalytic core - and CF(0) - the membrane proton channel. CF(1) has five subunits: alpha(3), beta(3), gamma(1), delta(1), epsilon(1). CF(0) has three main subunits: a(1), b(2) and c(9-12). The alpha and beta chains form an alternating ring which encloses part of the gamma chain. CF(1) is attached to CF(0) by a central stalk formed by the gamma and epsilon chains, while a peripheral stalk is formed by the delta and b chains.

The protein localises to the cell membrane. The catalysed reaction is ATP + H2O + 4 H(+)(in) = ADP + phosphate + 5 H(+)(out). Functionally, produces ATP from ADP in the presence of a proton gradient across the membrane. The alpha chain is a regulatory subunit. This is ATP synthase subunit alpha from Stenotrophomonas maltophilia (strain K279a).